Reading from the N-terminus, the 197-residue chain is Dehydrin DHN1 (197 aa).

Positions 1–14 (MSQYQNQYGAQTGM) are enriched in polar residues. Disordered regions lie at residues 1–86 (MSQY…GTNP) and 133–197 (GTEQ…CTGH). A run of 2 repeats spans residues 16-21 (DEYGNP) and 26-31 (DQYGNP). Positions 16-31 (DEYGNPVNQVDQYGNP) are 2 X approximate repeats. Gly residues predominate over residues 74 to 83 (THTGGVGGYG). One copy of the 2-1 repeat lies at 126–133 (KIKEKIPG). Positions 126–190 (KIKEKIPGTE…MDKIKEKLPG (65 aa)) are 2 X approximate repeats. Positions 144–160 (AGYGSTGYGASGGGIGN) are enriched in gly residues. Over residues 165–188 (YVREEHRVDHGEKKGIMDKIKEKL) the composition is skewed to basic and acidic residues. A 2-2 repeat occupies 183–190 (KIKEKLPG).

This sequence belongs to the plant dehydrin family. In terms of tissue distribution, shoots, roots, and cotyledon from dehydrating seedlings.

In Pisum sativum (Garden pea), this protein is Dehydrin DHN1 (DHN1).